The sequence spans 395 residues: Putative pyridoxal phosphate-dependent acyltransferase (395 aa).

110–111 (GF) is a pyridoxal 5'-phosphate binding site. Position 135 (histidine 135) interacts with substrate. Pyridoxal 5'-phosphate-binding positions include serine 185, 210–213 (DDAH), and 240–243 (TLSK). N6-(pyridoxal phosphate)lysine is present on lysine 243. Threonine 357 contacts substrate.

The protein belongs to the class-II pyridoxal-phosphate-dependent aminotransferase family. Homodimer. It depends on pyridoxal 5'-phosphate as a cofactor.

This chain is Putative pyridoxal phosphate-dependent acyltransferase, found in Staphylococcus aureus (strain MRSA252).